The chain runs to 329 residues: MSNLLVQVSKTGPSSVLQVITKEIPKPAPNGLVIKNAYAGLNYIDTYLRTGLYTAPLPYIPGKEAAGVVAAVGDKVEADFKVGDRVVYLTPFGAYAQYTNVPTTLVSKVSEKIPLKIASAALLQGLTAYTLIEEAYPVKTGDTVVVHAAAGGVGLLLCQMLRARNVHVIATASTAAKRRIAIKNGAEIACSYEDLTKVVADYTNGKGVDAAYDSVGIDTLSSSLDALRNGGTMVSFGNASGAIDAIPLKFLSARCLKFVRPSLFGYITGHAVFEGYVSRLWKEILDNNLNIAIHHIFKLSEAKEAHDAIESRATTGKLLLLCNEDLADA.

Position 191 is a phosphoserine (serine 191).

This sequence belongs to the zinc-containing alcohol dehydrogenase family. Quinone oxidoreductase subfamily.

The protein resides in the cytoplasm. It is found in the nucleus. It catalyses the reaction 2 a quinone + NADPH + H(+) = 2 a 1,4-benzosemiquinone + NADP(+). The protein is Probable quinone oxidoreductase (zta1) of Schizosaccharomyces pombe (strain 972 / ATCC 24843) (Fission yeast).